The following is a 310-amino-acid chain: Pantothenate kinase (310 aa).

Position 95-102 (G95–S102) interacts with ATP.

Belongs to the prokaryotic pantothenate kinase family.

It is found in the cytoplasm. The catalysed reaction is (R)-pantothenate + ATP = (R)-4'-phosphopantothenate + ADP + H(+). It participates in cofactor biosynthesis; coenzyme A biosynthesis; CoA from (R)-pantothenate: step 1/5. This Mycobacteroides abscessus (strain ATCC 19977 / DSM 44196 / CCUG 20993 / CIP 104536 / JCM 13569 / NCTC 13031 / TMC 1543 / L948) (Mycobacterium abscessus) protein is Pantothenate kinase.